Consider the following 126-residue polypeptide: Holo-[acyl-carrier-protein] synthase (126 aa).

Residues Asp-9 and Glu-58 each coordinate Mg(2+).

This sequence belongs to the P-Pant transferase superfamily. AcpS family. Requires Mg(2+) as cofactor.

The protein resides in the cytoplasm. The catalysed reaction is apo-[ACP] + CoA = holo-[ACP] + adenosine 3',5'-bisphosphate + H(+). Its function is as follows. Transfers the 4'-phosphopantetheine moiety from coenzyme A to a Ser of acyl-carrier-protein. The polypeptide is Holo-[acyl-carrier-protein] synthase (Serratia proteamaculans (strain 568)).